A 529-amino-acid chain; its full sequence is Snake venom 5'-nucleotidase (529 aa).

Gly1 is a signal peptide. Residues Asp12 and His14 each contribute to the Zn(2+) site. Cys27 and Cys32 form a disulfide bridge. 4 residues coordinate Zn(2+): Asp60, Asn92, His195, and His218. Asn308 and Asn322 each carry an N-linked (GlcNAc...) asparagine glycan. 2 disulfides stabilise this stretch: Cys328/Cys333 and Cys340/Cys362. Arg329 contributes to the AMP binding site. Residues Asn365, Arg370, and Phe393 each coordinate AMP. The cysteines at positions 452 and 455 are disulfide-linked. AMP contacts are provided by Phe476 and Asp482. Ser525 carries the GPI-anchor amidated serine lipid modification. Residues 526 to 529 constitute a propeptide, removed in mature form; the sequence is AGSL.

Belongs to the 5'-nucleotidase family. Zn(2+) is required as a cofactor. Venom 5'-nucleotidases (or a part thereof) may be released into the venom via exosome-like vesicles. They may be attached via a GPI anchor to the membrane of these vesicles. Soluble forms of 5'-nucleotidase might be released by cleavage of the ectodomain in the exosome-like vesicles or venom gland cells. As to expression, expressed by the venom gland.

It is found in the membrane. The enzyme catalyses a ribonucleoside 5'-phosphate + H2O = a ribonucleoside + phosphate. In terms of biological role, hydrolyzes nucleotides into nucleosides. Snake venom 5'-nucleotidases are widely distributed among venomous snake taxa, but there is a lack of information about their biological activities. They have been shown to inhibit platelet aggregation. This effect may be due to the liberation of inhibitory AMP or adenosine by its action on ADP released upon initiation of aggregation. Venom 5'-nucleotidases are also known to synergistically act in vivo with other toxins like ADPases, phospholipases, and disintegrins to exert a more pronounced anti-coagulant effect. The protein is Snake venom 5'-nucleotidase of Naja atra (Chinese cobra).